A 367-amino-acid chain; its full sequence is Peptide chain release factor 2 (367 aa).

Gln-250 is modified (N5-methylglutamine).

Belongs to the prokaryotic/mitochondrial release factor family. In terms of processing, methylated by PrmC. Methylation increases the termination efficiency of RF2.

The protein resides in the cytoplasm. Functionally, peptide chain release factor 2 directs the termination of translation in response to the peptide chain termination codons UGA and UAA. The protein is Peptide chain release factor 2 of Mycobacteroides abscessus (strain ATCC 19977 / DSM 44196 / CCUG 20993 / CIP 104536 / JCM 13569 / NCTC 13031 / TMC 1543 / L948) (Mycobacterium abscessus).